The following is a 536-amino-acid chain: Solute carrier family 2, facilitated glucose transporter member 10 (536 aa).

At 1 to 15 the chain is on the cytoplasmic side; sequence MGLRPAVLLLCASVS. A helical membrane pass occupies residues 16-36; sequence LLGGLTFGYELAVISGALLPL. The Extracellular segment spans residues 37–48; sequence QLNFGLSCLEQE. Residues 49–69 form a helical membrane-spanning segment; sequence LLVGSLLLGALLASLVGGFLI. Topologically, residues 70 to 82 are cytoplasmic; it reads DCYGRRRAILGSN. A helical transmembrane segment spans residues 83-103; the sequence is AVLLAGSLILGLASSLPWLLL. Topologically, residues 104-107 are extracellular; sequence GRLS. Residues 108–128 traverse the membrane as a helical segment; the sequence is VGFAISLSSMACCIYVSELVG. At 129 to 132 the chain is on the cytoplasmic side; the sequence is PRQR. Residues 133–153 form a helical membrane-spanning segment; it reads GVLVSLYEVGITVGILFSYGL. Over 154–166 the chain is Extracellular; sequence NYVLAGSPWGWRH. A helical transmembrane segment spans residues 167 to 187; it reads MFGWAAAPALLQSLSLFLLPA. The Cytoplasmic segment spans residues 188–232; that stretch reads GAEGTAAPKDLIPLQGRETSKPGLVKPQYSFLDLFRAQDGMWSRT. The helical transmembrane segment at 233-253 threads the bilayer; the sequence is VVGLGLVLFQQLTGQPNVLYY. 242-243 provides a ligand contact to D-glucose; sequence QQ. Residues 254–269 lie on the Extracellular side of the membrane; the sequence is ASTIFRSVGFHGGSSA. A helical membrane pass occupies residues 270–290; that stretch reads VLASVGLGTVKVAATLVATGL. Topologically, residues 291 to 298 are cytoplasmic; it reads VDRAGRRV. The chain crosses the membrane as a helical span at residues 299–319; sequence LLLFGCALMALSVSGIGLVSF. Residues 320–402 are Extracellular-facing; the sequence is AVSLDSGPSC…VPTSPILEHT (83 aa). The chain crosses the membrane as a helical span at residues 403–423; it reads LLCWSALVCMMVYVSAFSVGF. The Cytoplasmic portion of the chain corresponds to 424–442; it reads GPVTWLVLSEIYPAEIRGR. Trp428 lines the D-glucose pocket. Residues 443 to 463 traverse the membrane as a helical segment; the sequence is AFAFCSSFNWAANLFISLSFL. At 464–468 the chain is on the extracellular side; that stretch reads DLIGA. A helical transmembrane segment spans residues 469-489; it reads IGLAWTFLLYGLTAVLGLAFI. At 490–536 the chain is on the cytoplasmic side; that stretch reads YLLVPETKGQSLAEIEQQFQTSRFPLNFGHRQRIGIQYHRLDVSSAS.

Belongs to the major facilitator superfamily. Sugar transporter (TC 2.A.1.1) family. Glucose transporter subfamily.

It localises to the endomembrane system. The protein resides in the cytoplasm. The protein localises to the perinuclear region. It carries out the reaction D-glucose(out) = D-glucose(in). In terms of biological role, facilitative glucose transporter required for the development of the cardiovascular system. This Mus musculus (Mouse) protein is Solute carrier family 2, facilitated glucose transporter member 10.